A 158-amino-acid chain; its full sequence is MNYIPMTLKGAEKLREELKYLKQTKRSEIIKSISEARQYGDLKENAEYQAAKEQQYFCESRIKEIESKLMHSKIIDIKKIPFRDRVVFGSTITIKNLKTLEEKTYKIVGDDEANFKNNLISISSPLSRGLIGKKTLEIVNINTPSGIIKYKILKINYL.

It belongs to the GreA/GreB family.

Functionally, necessary for efficient RNA polymerase transcription elongation past template-encoded arresting sites. The arresting sites in DNA have the property of trapping a certain fraction of elongating RNA polymerases that pass through, resulting in locked ternary complexes. Cleavage of the nascent transcript by cleavage factors such as GreA or GreB allows the resumption of elongation from the new 3'terminus. GreA releases sequences of 2 to 3 nucleotides. This is Transcription elongation factor GreA from Wigglesworthia glossinidia brevipalpis.